The chain runs to 445 residues: 6-phosphogluconate dehydrogenase, decarboxylating (445 aa).

NADP(+) is bound by residues 1-4, 22-24, 63-65, and N91; these read AVMG, NRS, and VKA. Substrate contacts are provided by residues N91 and 117 to 119; that span reads SGG. The active-site Proton acceptor is K172. Residue 175–176 participates in substrate binding; it reads HN. E179 (proton donor) is an active-site residue. Residues Y180, K249, R276, R434, and H440 each contribute to the substrate site.

It belongs to the 6-phosphogluconate dehydrogenase family. Homodimer.

It carries out the reaction 6-phospho-D-gluconate + NADP(+) = D-ribulose 5-phosphate + CO2 + NADPH. The protein operates within carbohydrate degradation; pentose phosphate pathway; D-ribulose 5-phosphate from D-glucose 6-phosphate (oxidative stage): step 3/3. Its function is as follows. Catalyzes the oxidative decarboxylation of 6-phosphogluconate to ribulose 5-phosphate and CO(2), with concomitant reduction of NADP to NADPH. This is 6-phosphogluconate dehydrogenase, decarboxylating (gnd) from Raoultella planticola (Klebsiella planticola).